A 330-amino-acid chain; its full sequence is Malate dehydrogenase (330 aa).

Residue 12-18 coordinates NAD(+); the sequence is GAAGQIG. Arg93 and Arg99 together coordinate substrate. Residues Asn106, Gln113, and 130–132 each bind NAD(+); that span reads VGN. Substrate contacts are provided by Asn132 and Arg166. His191 (proton acceptor) is an active-site residue.

Belongs to the LDH/MDH superfamily. MDH type 2 family.

It catalyses the reaction (S)-malate + NAD(+) = oxaloacetate + NADH + H(+). Functionally, catalyzes the reversible oxidation of malate to oxaloacetate. In Azoarcus sp. (strain BH72), this protein is Malate dehydrogenase.